The sequence spans 312 residues: DNA-directed RNA polymerase subunit alpha (312 aa).

Residues 1–229 are alpha N-terminal domain (alpha-NTD); the sequence is MLQYQIERID…ELFQPLATVT (229 aa). Residues 240 to 312 are alpha C-terminal domain (alpha-CTD); sequence PSPEAQIPLE…ISIPQSRTSV (73 aa).

It belongs to the RNA polymerase alpha chain family. As to quaternary structure, in cyanobacteria the RNAP catalytic core is composed of 2 alpha, 1 beta, 1 beta', 1 gamma and 1 omega subunit. When a sigma factor is associated with the core the holoenzyme is formed, which can initiate transcription.

It carries out the reaction RNA(n) + a ribonucleoside 5'-triphosphate = RNA(n+1) + diphosphate. DNA-dependent RNA polymerase catalyzes the transcription of DNA into RNA using the four ribonucleoside triphosphates as substrates. The chain is DNA-directed RNA polymerase subunit alpha from Prochlorococcus marinus (strain MIT 9301).